A 107-amino-acid chain; its full sequence is Small ribosomal subunit protein eS25 (107 aa).

The tract at residues 1-35 (MPPKQQLSKAAKAAAAMAGGKKSKKKWSKKSHKDK) is disordered. A compositionally biased stretch (low complexity) spans 8-20 (SKAAKAAAAMAGG). A compositionally biased stretch (basic residues) spans 21–35 (KKSKKKWSKKSHKDK).

This sequence belongs to the eukaryotic ribosomal protein eS25 family.

In Candida glabrata (strain ATCC 2001 / BCRC 20586 / JCM 3761 / NBRC 0622 / NRRL Y-65 / CBS 138) (Yeast), this protein is Small ribosomal subunit protein eS25 (RPS25).